Consider the following 263-residue polypeptide: Ubiquitin domain-containing protein 7SL RNA2 (263 aa).

The 53-residue stretch at 1-53 (MNVDIDTETGSSFSITIDFGETVLQIKEKIEKSQGIPVSKQILYLDGKALEDD) folds into the Ubiquitin-like 1 domain. The interval 74–93 (ADPNQSNEQTEQSKQIDDKK) is disordered. Polar residues predominate over residues 76 to 86 (PNQSNEQTEQS). Residues 184–263 (FTVHVKPYQE…GDTIELIREK (80 aa)) form the Ubiquitin-like 2 domain.

This sequence belongs to the ubiquitin family. As to expression, expressed in seedlings, roots, stems, rosettes and flowers (at protein level).

It localises to the nucleus. Functionally, controls phase transition from the vegetative to the reproductive state. Involved in the maintenance of the shoot apical meristem (SAM) thus preventing inflorescence meristem (IM) formation and subsequent inflorescence stem development during flowering. Regulates leaf and organ morphology. The chain is Ubiquitin domain-containing protein 7SL RNA2 from Arabidopsis thaliana (Mouse-ear cress).